A 305-amino-acid chain; its full sequence is tRNA dimethylallyltransferase (305 aa).

8-15 is a binding site for ATP; sequence GPTAVGKT. 10–15 serves as a coordination point for substrate; that stretch reads TAVGKT. Positions 33–36 are interaction with substrate tRNA; the sequence is DSRQ.

This sequence belongs to the IPP transferase family. In terms of assembly, monomer. Mg(2+) is required as a cofactor.

It carries out the reaction adenosine(37) in tRNA + dimethylallyl diphosphate = N(6)-dimethylallyladenosine(37) in tRNA + diphosphate. Functionally, catalyzes the transfer of a dimethylallyl group onto the adenine at position 37 in tRNAs that read codons beginning with uridine, leading to the formation of N6-(dimethylallyl)adenosine (i(6)A). The sequence is that of tRNA dimethylallyltransferase from Thermotoga neapolitana (strain ATCC 49049 / DSM 4359 / NBRC 107923 / NS-E).